A 143-amino-acid chain; its full sequence is Peptide methionine sulfoxide reductase MsrB (143 aa).

The MsrB domain occupies 5–126 (KEEKIKSLNR…NSAALRFVPK (122 aa)). C115 acts as the Nucleophile in catalysis.

The protein belongs to the MsrB Met sulfoxide reductase family.

It carries out the reaction L-methionyl-[protein] + [thioredoxin]-disulfide + H2O = L-methionyl-(R)-S-oxide-[protein] + [thioredoxin]-dithiol. The polypeptide is Peptide methionine sulfoxide reductase MsrB (Bacillus subtilis (strain 168)).